The primary structure comprises 810 residues: Ecotropic viral integration site 5 protein homolog (810 aa).

The interval methionine 1–glutamate 483 is interaction with alpha-tubulin, gamma-tubulin, BIRC5 and FBXO5. Disordered regions lie at residues valine 49 to proline 80 and threonine 98 to alanine 123. Residues serine 51 to proline 80 are compositionally biased toward low complexity. Residues serine 102 and serine 113 each carry the phosphoserine modification. The segment covering leucine 103–alanine 123 has biased composition (low complexity). A dimerization region spans residues serine 128–isoleucine 693. Residues glycine 163–glycine 348 form the Rab-GAP TBC domain. The segment at glutamine 377–valine 810 is targeting to the centrosomes. Residues lysine 406–phenylalanine 716 adopt a coiled-coil conformation. An interaction with AURKB and INCENP region spans residues lysine 487–valine 810. Phosphoserine occurs at positions 497, 689, 776, and 778. Residues glycine 756 to valine 810 are disordered. Over residues leucine 785–valine 810 the composition is skewed to basic and acidic residues.

In terms of assembly, dimeric and monomeric. Interacts with alpha- and gamma-tubulin. Interacts with FBXO5. Interacts with the chromosome passenger complex (CPC) which is at least composed of AURKB/aurora-B, BIRC5/survivin, CDCA8/borealin and INCENP. In terms of processing, probably phosphorylated by PLK1; may be required for degradation during mitosis. Ubiquitinated. Degradation during prophase is ubiquitin-dependent. Expressed in various cell lines (at protein level). Expressed in a wide range of tissues including brain and adrenal.

The protein localises to the nucleus. It is found in the cytoplasm. The protein resides in the cytoskeleton. It localises to the microtubule organizing center. Its subcellular location is the centrosome. The protein localises to the spindle. In terms of biological role, functions as a regulator of cell cycle progression by stabilizing the FBXO5 protein and promoting cyclin-A accumulation during interphase. May play a role in cytokinesis. This is Ecotropic viral integration site 5 protein homolog (EVI5) from Homo sapiens (Human).